The sequence spans 107 residues: Large ribosomal subunit protein bL21 (107 aa).

It belongs to the bacterial ribosomal protein bL21 family. As to quaternary structure, part of the 50S ribosomal subunit. Contacts protein L20.

Functionally, this protein binds to 23S rRNA in the presence of protein L20. The chain is Large ribosomal subunit protein bL21 from Buchnera aphidicola subsp. Schizaphis graminum (strain Sg).